The primary structure comprises 280 residues: uncharacterized protein (280 aa).

Belongs to the herpesviridae BDLF2 family.

This is an uncharacterized protein from Saimiri sciureus (Common squirrel monkey).